The primary structure comprises 193 residues: Cerebellin-1 (193 aa).

A signal peptide spans M1–G21. N-linked (GlcNAc...) asparagine glycosylation occurs at N23. Residues C34–C38 form an essential for interaction with NRXN1 and linker of two C1q trimers into disulfide-linked hexamers region. Residues S57–L193 enclose the C1q domain. The necessary for interaction with CBLN3, and homotrimerization stretch occupies residues V62–L193. N79 carries an N-linked (GlcNAc...) asparagine glycan. The segment at Y122–D147 is essential for interaction with GRID2.

In terms of assembly, homohexamer; disulfide-linked homotrimers. The trimers associate via N-terminal cysteine residues to form disulfide-linked hexamers. May form oligomers with CBLN2, CBLN3 AND CBLN4 prior to secretion. Once secreted, does not interact with other CBLN family members. Interacts with GRID1. Interacts with NRXN1 and NRXN2 long (alpha) and short (beta) isoforms produced by alternative promoter usage. Competes with NLGN1 for NRXN1-binding. Weakly interacts with NRXN3 short isoform and not at all with NRXN3 long isoform. Interacts (via C1q domain) with GRID2; GRID2-binding is calcium-independent; CBLN1 hexamers anchor GRID2 N-terminal domain dimers to monomeric NRXN1 isoform beta; promotes synaptogenesis and mediates the D-Serine-dependent long term depression signals and AMPA receptor endocytosis. Interacts with OTOL1. Post-translationally, the proteolytic processing to yield cerebellin seems to occur either prior to the secretion by presynaptic neurons and subsequent oligomerization or in some other location after release of the mature protein. In terms of processing, sialoglycoprotein. As to expression, in the Purkinje cells postsynaptic structures. In the cerebellum, cerebellin is much less abundant than [des-Ser1]-cerebellin.

The protein resides in the secreted. The protein localises to the postsynaptic cell membrane. In terms of biological role, required for synapse integrity and synaptic plasticity. During cerebellar synapse formation, essential for the matching and maintenance of pre- and post-synaptic elements at parallel fiber-Purkinje cell synapses, the establishment of the proper pattern of climbing fiber-Purkinje cell innervation, and induction of long-term depression at parallel fiber-Purkinje cell synapses. Plays a role as a synaptic organizer that acts bidirectionally on both pre- and post-synaptic components. On the one hand induces accumulation of synaptic vesicles in the pre-synaptic part by binding with NRXN1 and in other hand induces clustering of GRID2 and its associated proteins at the post-synaptic site through association of GRID2. NRXN1-CBLN1-GRID2 complex directly induces parallel fiber protrusions that encapsulate spines of Purkinje cells leading to accumulation of GRID2 and synaptic vesicles. Required for CBLN3 export from the endoplasmic reticulum and secretion. NRXN1-CBLN1-GRID2 complex mediates the D-Serine-dependent long term depression signals and AMPA receptor endocytosis. Essential for long-term maintenance but not establishment of excitatory synapses. Inhibits the formation and function of inhibitory GABAergic synapses in cerebellar Purkinje cells. Functionally, the cerebellin peptide exerts neuromodulatory functions. Directly stimulates norepinephrine release via the adenylate cyclase/PKA-dependent signaling pathway; and indirectly enhances adrenocortical secretion in vivo, through a paracrine mechanism involving medullary catecholamine release. The chain is Cerebellin-1 (CBLN1) from Homo sapiens (Human).